A 419-amino-acid chain; its full sequence is GTPase Obg (419 aa).

An Obg domain is found at 2 to 159 (SAFVDAVTVE…FLAKVELQVL (158 aa)). The region spanning 160 to 325 (ADVGLLGYPN…LKYEIATTLK (166 aa)) is the OBG-type G domain. Residues 166-173 (GYPNVGKS), 191-195 (FTTLS), 212-215 (DLPG), 279-282 (NKMD), and 306-308 (SAL) each bind GTP. Positions 173 and 193 each coordinate Mg(2+). The OCT domain maps to 341-419 (LNAEDAVDFI…IFSYEFEYLE (79 aa)).

It belongs to the TRAFAC class OBG-HflX-like GTPase superfamily. OBG GTPase family. Monomer. Requires Mg(2+) as cofactor.

The protein localises to the cytoplasm. In terms of biological role, an essential GTPase which binds GTP, GDP and possibly (p)ppGpp with moderate affinity, with high nucleotide exchange rates and a fairly low GTP hydrolysis rate. Plays a role in control of the cell cycle, stress response, ribosome biogenesis and in those bacteria that undergo differentiation, in morphogenesis control. The sequence is that of GTPase Obg from Acholeplasma laidlawii (strain PG-8A).